A 320-amino-acid chain; its full sequence is Cytochrome c1-1, heme protein, mitochondrial (320 aa).

The transit peptide at 1–77 (MSLGKKIRIG…LLSFATIAYS (77 aa)) directs the protein to the mitochondrion. The Mitochondrial intermembrane segment spans residues 78-280 (DEAEHGLECP…WAAEPEMEER (203 aa)). The Cytochrome c domain maps to 103–210 (ASIRRGHQVY…NGQNYVFALL (108 aa)). The heme c site is built by Cys116, Cys119, His120, and Met239. Residues 281–301 (KLMGFKWIFVLSLALLQAAYY) traverse the membrane as a helical segment. Topologically, residues 302-320 (RRLRWSVLKSRKLVLDVVN) are mitochondrial matrix.

This sequence belongs to the cytochrome c family. As to quaternary structure, component of the ubiquinol-cytochrome c oxidoreductase (cytochrome b-c1 complex, complex III, CIII), a multisubunit enzyme composed of 3 respiratory subunits cytochrome b, cytochrome c1 and Rieske protein, 2 core protein subunits, and additional low-molecular weight protein subunits. The complex exists as an obligatory dimer and forms supercomplexes (SCs) in the inner mitochondrial membrane with cytochrome c oxidase (complex IV, CIV). Heme c serves as cofactor. In all tissues analyzed.

The protein localises to the mitochondrion inner membrane. It catalyses the reaction a quinol + 2 Fe(III)-[cytochrome c](out) = a quinone + 2 Fe(II)-[cytochrome c](out) + 2 H(+)(out). In terms of biological role, component of the ubiquinol-cytochrome c oxidoreductase, a multisubunit transmembrane complex that is part of the mitochondrial electron transport chain which drives oxidative phosphorylation. The respiratory chain contains 3 multisubunit complexes succinate dehydrogenase (complex II, CII), ubiquinol-cytochrome c oxidoreductase (cytochrome b-c1 complex, complex III, CIII) and cytochrome c oxidase (complex IV, CIV), that cooperate to transfer electrons derived from NADH and succinate to molecular oxygen, creating an electrochemical gradient over the inner membrane that drives transmembrane transport and the ATP synthase. The cytochrome b-c1 complex catalyzes electron transfer from ubiquinol to cytochrome c, linking this redox reaction to translocation of protons across the mitochondrial inner membrane, with protons being carried across the membrane as hydrogens on the quinol. In the process called Q cycle, 2 protons are consumed from the matrix, 4 protons are released into the intermembrane space and 2 electrons are passed to cytochrome c. Cytochrome c1 is a catalytic core subunit containing a c-type heme. It transfers electrons from the [2Fe-2S] iron-sulfur cluster of the Rieske protein to cytochrome c. The sequence is that of Cytochrome c1-1, heme protein, mitochondrial (CYCL) from Solanum tuberosum (Potato).